Here is a 177-residue protein sequence, read N- to C-terminus: Adenine phosphoribosyltransferase (177 aa).

It belongs to the purine/pyrimidine phosphoribosyltransferase family. Homodimer.

The protein localises to the cytoplasm. It catalyses the reaction AMP + diphosphate = 5-phospho-alpha-D-ribose 1-diphosphate + adenine. It functions in the pathway purine metabolism; AMP biosynthesis via salvage pathway; AMP from adenine: step 1/1. Functionally, catalyzes a salvage reaction resulting in the formation of AMP, that is energically less costly than de novo synthesis. This is Adenine phosphoribosyltransferase from Anaeromyxobacter sp. (strain Fw109-5).